Consider the following 96-residue polypeptide: UPF0235 protein YggU (96 aa).

Belongs to the UPF0235 family.

This Salmonella typhi protein is UPF0235 protein YggU.